Reading from the N-terminus, the 90-residue chain is Chaplin-G (90 aa).

The first 27 residues, 1-27 (MSRIAKAAGVALGTGAVVLSGTGMAMA), serve as a signal peptide directing secretion. Residues 38–78 (SPGVLSGNVVQVPVHVPVNLCGNTIDVIGLLNPAFGNACEN) form the Chaplin domain. An intrachain disulfide couples C58 to C76.

Belongs to the chaplin family. Short chaplin subfamily.

It is found in the cell surface. The protein localises to the secreted. It localises to the cell wall. In terms of biological role, one of 8 partially redundant surface-active proteins required for efficient formation of aerial mycelium; the short chaplins assemble into a hydrophobic, amyloidal fibrillar surface layer that envelopes and protects aerial hyphae and spores, presumably anchored to the long chaplins. Chaplins have an overlapping function with the surface-active SapB peptide; chaplins are essential on minimal medium while on rich medium both chaplins and SapB are required for efficient aerial hyphae formation. Chaplins are also involved in cell attachment to a hydrophobic surface. Forms amyloid fibrils in vitro probably composed of stacked beta-sheets, at low extracellular concentrations individually restores the ability to form aerial hyphae to a chaplin-deficient strain. A small chaplin extract (ChpD, ChpE, ChpF, ChpG and ChpH) self-assembles into 2 different amyloids; small fibrils at the air-water interface form an amphipathic membrane that resembles spore-surface structures involved in aerial hyphae formation, and hydrophilic fibrils in solution that resemble the fibers that attach cells to a hydrophobic surface. At the air-water interface the hydrophilic surface is in contact with water (probably equivalent to the peptidoglycan layer), while the hydrophobic face is exposed to the air, making the surface of the aerial hyphae hydrophobic. A small chaplin extract applied to a chaplin-deficient strain restores aerial hyphae formation. The small chaplin extract forms an amyloid-like structure similar to that seen on the surface of cells without rodlets (rdlA-rdlB deletions), and is highly surface active, reducing surface tension from 72 to 26 mJ/m(2), which probably allows escape of hyphae from an aqueous environment into air. ChpF and ChpG are sufficient to restore the rodlet layer and hydrophobicity to a strain deleted for the other 6 chaplin genes. This Streptomyces coelicolor (strain ATCC BAA-471 / A3(2) / M145) protein is Chaplin-G.